The primary structure comprises 513 residues: ATP synthase subunit alpha (513 aa).

171–178 (GDRQIGKT) provides a ligand contact to ATP.

Belongs to the ATPase alpha/beta chains family. In terms of assembly, F-type ATPases have 2 components, CF(1) - the catalytic core - and CF(0) - the membrane proton channel. CF(1) has five subunits: alpha(3), beta(3), gamma(1), delta(1), epsilon(1). CF(0) has three main subunits: a(1), b(2) and c(9-12). The alpha and beta chains form an alternating ring which encloses part of the gamma chain. CF(1) is attached to CF(0) by a central stalk formed by the gamma and epsilon chains, while a peripheral stalk is formed by the delta and b chains.

The protein localises to the cell membrane. It carries out the reaction ATP + H2O + 4 H(+)(in) = ADP + phosphate + 5 H(+)(out). Produces ATP from ADP in the presence of a proton gradient across the membrane. The alpha chain is a regulatory subunit. The sequence is that of ATP synthase subunit alpha from Wolbachia pipientis subsp. Culex pipiens (strain wPip).